A 423-amino-acid polypeptide reads, in one-letter code: Histone acetyltransferase type B subunit 2 (423 aa).

5 WD repeats span residues 138 to 174 (PHIE…TLEE), 175 to 224 (SKAQ…KPKS), 228 to 268 (SHDD…EPVK), 271 to 311 (PTAS…SPLH), and 315 to 355 (GHQD…AEQS). An interaction with the histone H4 N-terminus region spans residues 357-361 (DDADD). The WD 6 repeat unit spans residues 372 to 412 (GHRSPVNEFSFNPQIPWLLASTEEDNVIQAWKVSMKLVNAS).

It belongs to the WD repeat RBAP46/RBAP48/MSI1 family. In terms of assembly, component of the HAT-B complex composed of at least HAT1 and HAT2. The HAT-B complex binds to histone H4 tail.

Its subcellular location is the cytoplasm. It localises to the nucleus. In terms of biological role, regulatory subunit of the histone acetylase B (HAT-B) complex. The complex acetylates 'Lys-12' of histone H4 which is required for telomeric silencing. The sequence is that of Histone acetyltransferase type B subunit 2 (HAT2) from Eremothecium gossypii (strain ATCC 10895 / CBS 109.51 / FGSC 9923 / NRRL Y-1056) (Yeast).